The primary structure comprises 451 residues: D-inositol 3-phosphate glycosyltransferase (451 aa).

A 1D-myo-inositol 3-phosphate-binding site is contributed by His-21. UDP-N-acetyl-alpha-D-glucosamine-binding positions include 27–28 (QP) and Gly-35. Residues 32-37 (DAGGMN), Lys-90, Tyr-123, Thr-147, and Arg-167 contribute to the 1D-myo-inositol 3-phosphate site. The UDP-N-acetyl-alpha-D-glucosamine site is built by Arg-241, Lys-246, and Gln-305. Residues Tyr-314, Arg-315, and Ala-317 each coordinate Mg(2+). Residues Glu-327 and Glu-335 each contribute to the UDP-N-acetyl-alpha-D-glucosamine site. Thr-341 provides a ligand contact to Mg(2+).

It belongs to the glycosyltransferase group 1 family. MshA subfamily. Homodimer.

The catalysed reaction is 1D-myo-inositol 3-phosphate + UDP-N-acetyl-alpha-D-glucosamine = 1D-myo-inositol 2-acetamido-2-deoxy-alpha-D-glucopyranoside 3-phosphate + UDP + H(+). Its function is as follows. Catalyzes the transfer of a N-acetyl-glucosamine moiety to 1D-myo-inositol 3-phosphate to produce 1D-myo-inositol 2-acetamido-2-deoxy-glucopyranoside 3-phosphate in the mycothiol biosynthesis pathway. The protein is D-inositol 3-phosphate glycosyltransferase of Nocardia farcinica (strain IFM 10152).